A 48-amino-acid polypeptide reads, in one-letter code: Photosystem II reaction center protein K (48 aa).

The propeptide occupies Met1 to Gly11. The chain crosses the membrane as a helical span at residues Leu23–Ala43.

The protein belongs to the PsbK family. As to quaternary structure, PSII is composed of 1 copy each of membrane proteins PsbA, PsbB, PsbC, PsbD, PsbE, PsbF, PsbH, PsbI, PsbJ, PsbK, PsbL, PsbM, PsbT, PsbX, PsbY, PsbZ, Psb30/Ycf12, at least 3 peripheral proteins of the oxygen-evolving complex and a large number of cofactors. It forms dimeric complexes.

It is found in the plastid. Its subcellular location is the chloroplast thylakoid membrane. One of the components of the core complex of photosystem II (PSII). PSII is a light-driven water:plastoquinone oxidoreductase that uses light energy to abstract electrons from H(2)O, generating O(2) and a proton gradient subsequently used for ATP formation. It consists of a core antenna complex that captures photons, and an electron transfer chain that converts photonic excitation into a charge separation. This Lepocinclis buetschlii protein is Photosystem II reaction center protein K.